The sequence spans 497 residues: IWS1-like protein (497 aa).

The disordered stretch occupies residues 1–191 (MSDHEGASPA…SDRRGGRNFE (191 aa)). Low complexity-rich tracts occupy residues 7–23 (ASPA…PVSP) and 47–57 (PLAPRSPASPR). Basic and acidic residues-rich tracts occupy residues 123 to 134 (EGDKQQKRKDLF), 144 to 160 (DRPK…VKGD), and 181 to 191 (PSDRRGGRNFE). The region spanning 281–361 (SALSEWLAPL…GEWARPIYHL (81 aa)) is the TFIIS N-terminal domain. The disordered stretch occupies residues 369–433 (SRQEREERDY…GDKGYINRAR (65 aa)). 2 stretches are compositionally biased toward basic and acidic residues: residues 370–382 (RQER…SRMP) and 401–411 (APKRPRIRDAE).

Belongs to the IWS1 family.

The protein resides in the nucleus. The protein is IWS1-like protein of Caenorhabditis briggsae.